A 684-amino-acid polypeptide reads, in one-letter code: Phenoloxidase 2 (684 aa).

Residues methionine 1–arginine 51 constitute a propeptide, removed by PPAF1. 2 N-linked (GlcNAc...) asparagine glycosylation sites follow: asparagine 81 and asparagine 91. Histidine 209, histidine 213, and histidine 238 together coordinate Cu cation. The N-linked (GlcNAc...) asparagine glycan is linked to asparagine 330. Glutamate 350 (proton acceptor) is an active-site residue. The Cu cation site is built by histidine 365, histidine 369, and histidine 405. Asparagine 416, asparagine 487, asparagine 491, and asparagine 546 each carry an N-linked (GlcNAc...) asparagine glycan. 2 disulfide bridges follow: cysteine 581–cysteine 623 and cysteine 583–cysteine 630.

This sequence belongs to the tyrosinase family. As to quaternary structure, dimer. Might form a homodimer or a heterodimer with PPO1. Might interact with PPAF2 (via CLIP domain); the interaction might be required for PPO2 activity. The cofactor is Cu(2+). Precursor cleaved by PPAF1. Hemocytes.

Its subcellular location is the secreted. In terms of biological role, this is a copper-containing oxidase that functions in the formation of pigments such as melanins and other polyphenolic compounds. Catalyzes the oxidation of o-diphenols (N-acetyldopamine, 4-methylcatechol and dopamine). Cannot oxidize monophenols and p-phenols (L-tyrosine, tyramine, gentisic acid and hydroquinone). Binds to the surface of hemocytes and is involved in hemocyte melanization. Activation of the enzyme in response to bacterial lipopolysaccharides (LPS) suggests it may play a role in innate immunity. The sequence is that of Phenoloxidase 2 from Holotrichia diomphalia (Korean black chafer).